The chain runs to 57 residues: Benzylsuccinate synthase gamma subunit (57 aa).

Heterohexamer composed of 2 alpha subunits, 2 beta subunits and 2 gamma subunits.

The enzyme catalyses toluene + fumarate = 2-benzylsuccinate. Its pathway is xenobiotic degradation; toluene degradation. Its activity is regulated as follows. Activated by the benzylsuccinate synthase activating enzyme BssD. Rapidly inactivated by oxygen. Its function is as follows. Catalyzes the addition of fumarate to the methyl group of toluene, leading to the formation of benzylsuccinate. This is Benzylsuccinate synthase gamma subunit (bssC) from Thauera aromatica.